A 119-amino-acid chain; its full sequence is Enhancer of yellow 2 transcription factor (119 aa).

Residues 93–119 (LTENETEGTDNHDDDEDDEDENGTEDN) form a disordered region. Residues 96-119 (NETEGTDNHDDDEDDEDENGTEDN) are compositionally biased toward acidic residues.

This sequence belongs to the ENY2 family. Component of the nuclear pore complex (NPC)-associated AMEX complex (anchoring and mRNA export complex), composed of at least e(y)2 and xmas-2. Component of the SAGA transcription coactivator-HAT complexes, at least composed of Ada2b, e(y)2, Pcaf/Gcn5, Taf10 and Nipped-A/Trrap. Within the SAGA complex, e(y)2, Sgf11, and not/nonstop form an additional subcomplex of SAGA called the DUB module (deubiquitination module). Component of the THO complex, composed of at least e(y)2, HPR1, THO2, THOC5, THOC6 and THOC7. Interacts with e(y)1. Interacts with su(Hw) (via zinc fingers). Interacts with xmas-2; required for localization to the nuclear periphery. Interacts with the nuclear pore complex (NPC).

It localises to the nucleus. The protein resides in the nucleoplasm. The protein localises to the cytoplasm. In terms of biological role, involved in mRNA export coupled transcription activation by association with both the AMEX and the SAGA complexes. The SAGA complex is a multiprotein complex that activates transcription by remodeling chromatin and mediating histone acetylation and deubiquitination. Within the SAGA complex, participates in a subcomplex that specifically deubiquitinates histone H2B. The SAGA complex is recruited to specific gene promoters by activators, where it is required for transcription. Required for nuclear receptor-mediated transactivation. Involved in transcription elongation by recruiting the THO complex onto nascent mRNA. The AMEX complex functions in docking export-competent ribonucleoprotein particles (mRNPs) to the nuclear entrance of the nuclear pore complex (nuclear basket). AMEX participates in mRNA export and accurate chromatin positioning in the nucleus by tethering genes to the nuclear periphery. The chain is Enhancer of yellow 2 transcription factor from Drosophila willistoni (Fruit fly).